Consider the following 315-residue polypeptide: Long form salivary protein D7L1 (315 aa).

Residues 1–18 (MIIVAVLLSFLAHLLVQA) form the signal peptide. Disulfide bonds link cysteine 37–cysteine 73 and cysteine 69–cysteine 128. A thromboxane A2-binding site is contributed by tryptophan 55. Tryptophan 58 provides a ligand contact to leukotriene C4. Tyrosine 70 serves as a coordination point for thromboxane A2. Leukotriene C4 contacts are provided by glycine 152 and lysine 170. Lysine 170 serves as a coordination point for thromboxane A2. 2 disulfide bridges follow: cysteine 178–cysteine 211 and cysteine 252–cysteine 263.

Belongs to the PBP/GOBP family. In terms of tissue distribution, distal-lateral and median lobes of female salivary gland (at protein level). Not detected in male salivary gland (at protein level). Expressed in female salivary gland. Not detected in female carcass without salivary glands. Expressed in male salivary gland and other tissues.

It localises to the secreted. Functionally, modulates blood feeding of female mosquitoes on vertebrate species by binding and sequestering different mediators involved in the host response. Binds leukotriene C4, leukotriene D4, leukotriene E4 and stable analogs of thromboxane A2, U-46619 and carbocyclic TXA2. Binds weakly prostaglandins: PGD2, PGE2 and PGF2alpha. Does not bind leukotriene B4, biogenic amines, ADP, platelet activating phospholipid derivative PAF and arachidonic acid. Inhibits agonist-induced smooth muscle contraction. Inhibits platelet aggregation induced by low concentrations of collagen in thromboxane A2-dependent manner. The protein is Long form salivary protein D7L1 of Anopheles stephensi (Indo-Pakistan malaria mosquito).